Consider the following 393-residue polypeptide: Digeranylgeranylglycerophospholipid reductase 2 (393 aa).

Residues Asp-33, Cys-44, Ala-45, Gly-47, Arg-100, Ala-124, Asp-280, Gly-292, and Ile-293 each contribute to the FAD site.

Belongs to the geranylgeranyl reductase family. DGGGPL reductase subfamily. FAD is required as a cofactor.

It carries out the reaction a 2,3-bis-O-phytanyl-sn-glycerol 1-phospholipid + 8 A = a 2,3-bis-O-(geranylgeranyl)-sn-glycerol 1-phospholipid + 8 AH2. The catalysed reaction is 2,3-bis-O-(phytanyl)-sn-glycerol 1-phosphate + 8 A = 2,3-bis-O-(geranylgeranyl)-sn-glycerol 1-phosphate + 8 AH2. The enzyme catalyses CDP-2,3-bis-O-(geranylgeranyl)-sn-glycerol + 8 AH2 = CDP-2,3-bis-O-(phytanyl)-sn-glycerol + 8 A. It catalyses the reaction archaetidylserine + 8 AH2 = 2,3-bis-O-phytanyl-sn-glycero-3-phospho-L-serine + 8 A. The protein operates within membrane lipid metabolism; glycerophospholipid metabolism. Functionally, is involved in the reduction of 2,3-digeranylgeranylglycerophospholipids (unsaturated archaeols) into 2,3-diphytanylglycerophospholipids (saturated archaeols) in the biosynthesis of archaeal membrane lipids. Catalyzes the formation of archaetidic acid (2,3-di-O-phytanyl-sn-glyceryl phosphate) from 2,3-di-O-geranylgeranylglyceryl phosphate (DGGGP) via the hydrogenation of each double bond of the isoprenoid chains. Is also probably able to reduce double bonds of geranyl groups in CDP-2,3-bis-O-(geranylgeranyl)-sn-glycerol and archaetidylserine, thus acting at various stages in the biosynthesis of archaeal membrane lipids. This is Digeranylgeranylglycerophospholipid reductase 2 from Methanosphaera stadtmanae (strain ATCC 43021 / DSM 3091 / JCM 11832 / MCB-3).